A 211-amino-acid chain; its full sequence is MRPRAAGFTLIEVLLATMLLVGGLALAFATLRSASAISQRGEAIAQRSERTRAVEEFLRRRLSAALPIAMGIDTQSQQPMLFVGEPQRMRFAADVPDYLGRGGPYLHDVSVVGDGEQRTLTIALTMLQSGKEIEEGNALPAETLADDVQQVSFRYRGLDPQSGALSGWLPQWEWHDRLPLLVRIDIRSGGAAWPPVVVALPQSGGGGALAQ.

Positions Met-1–Gly-7 are cleaved as a propeptide — leader sequence. The residue at position 8 (Phe-8) is an N-methylphenylalanine. A helical transmembrane segment spans residues Phe-8–Phe-28.

It belongs to the GSP J family.

It localises to the membrane. Functionally, involved in a type II secretion system (T2SS, formerly general secretion pathway, GSP) for the export of proteins. This is Type II secretion system protein J (xpsJ) from Xanthomonas campestris pv. campestris (strain ATCC 33913 / DSM 3586 / NCPPB 528 / LMG 568 / P 25).